Consider the following 343-residue polypeptide: Geranylgeranyl pyrophosphate synthase 1 (343 aa).

Isopentenyl diphosphate is bound by residues K43, R46, and H75. Mg(2+)-binding residues include D82 and D86. R91 provides a ligand contact to dimethylallyl diphosphate. R92 serves as a coordination point for isopentenyl diphosphate. The dimethylallyl diphosphate site is built by K169, T170, and Q212. D215 lines the Mg(2+) pocket. N219, K229, and K239 together coordinate dimethylallyl diphosphate.

Belongs to the FPP/GGPP synthase family. It depends on Mg(2+) as a cofactor.

It catalyses the reaction isopentenyl diphosphate + dimethylallyl diphosphate = (2E)-geranyl diphosphate + diphosphate. It carries out the reaction isopentenyl diphosphate + (2E)-geranyl diphosphate = (2E,6E)-farnesyl diphosphate + diphosphate. The enzyme catalyses isopentenyl diphosphate + (2E,6E)-farnesyl diphosphate = (2E,6E,10E)-geranylgeranyl diphosphate + diphosphate. Its function is as follows. Geranylgeranyl pyrophosphate synthase; part of the gene cluster 4 that mediates the biosynthesis of an isoprenoid secondary metabolite. This is Geranylgeranyl pyrophosphate synthase 1 (GGS1) from Zymoseptoria tritici (strain CBS 115943 / IPO323) (Speckled leaf blotch fungus).